We begin with the raw amino-acid sequence, 213 residues long: Nicolin-1 (213 aa).

In terms of assembly, part of the neuronal tubulin polyglutamylase complex which contains TPGS1, TPGS2, TTLL1, LRRC49 and NICN1.

It localises to the nucleus. The sequence is that of Nicolin-1 (NICN1) from Canis lupus familiaris (Dog).